Reading from the N-terminus, the 3037-residue chain is Genome polyprotein (3037 aa).

The residue at position 2 (S2) is an N-acetylserine; by host. The segment at 2 to 23 (STNPKPQRKTKRNTNRRPQDVK) is interaction with STAT1. Residues 2–58 (STNPKPQRKTKRNTNRRPQDVKFPGGGQIVGGVYLLPRRGPRLGVRAARKTSERSQP) form an interaction with EIF2AK2/PKR region. An interaction with DDX3X region spans residues 2–59 (STNPKPQRKTKRNTNRRPQDVKFPGGGQIVGGVYLLPRRGPRLGVRAARKTSERSQPR). Positions 2–75 (STNPKPQRKT…PKDRRSTGKS (74 aa)) are disordered. Residues 2–168 (STNPKPQRKT…EDGINYATGN (167 aa)) are Cytoplasmic-facing. 2 short sequence motifs (nuclear localization signal) span residues 5–13 (PKPQRKTKR) and 38–43 (PRRGPR). A compositionally biased stretch (basic residues) spans 7 to 16 (PQRKTKRNTN). Positions 32-47 (GGVYLLPRRGPRLGVR) are enriched in low complexity. Residue S53 is modified to Phosphoserine; by host. Short sequence motifs (nuclear localization signal) lie at residues 58-64 (PRGRRQP) and 66-71 (PKDRRS). A phosphoserine; by host mark is found at S99 and S116. Residues 112–152 (PRHKSRNLGKVIDTLTCGFADLMGYIPVVGAPVGGVARALA) form an important for endoplasmic reticulum and mitochondrial localization region. Positions 122-173 (VIDTLTCGFADLMGYIPVVGAPVGGVARALAHGVRVLEDGINYATGNLPGCS) are interaction with APOA2. Positions 164–167 (YATG) are important for lipid droplets localization. Residues 169 to 189 (LPGCSFSIFLLALLSCISVPV) form a helical membrane-spanning segment. Positions 178-191 (LLALLSCISVPVSA) are cleaved as a propeptide — ER anchor for the core protein, removed in mature form by host signal peptidase. The Lumenal segment spans residues 190-358 (SAVEVRNTSS…TGGHWGVMFG (169 aa)). N-linked (GlcNAc...) asparagine; by host glycans are attached at residues N196, N209, and N234. Residues 265–296 (IVMSATLCSALYVGDVCGALMIAAQVVVVSPQ) form an important for fusion region. N305 is a glycosylation site (N-linked (GlcNAc...) asparagine; by host). Residues 359 to 379 (LAYFSMQGAWAKVVVILLLTA) traverse the membrane as a helical segment. The Lumenal segment spans residues 380–729 (GVEASTYTTG…WEWVVLLFLL (350 aa)). Residues 385 to 412 (TYTTGAVVGRSTHLFTSMFSLGSQQRVQ) form an HVR1 region. N-linked (GlcNAc...) (high mannose) asparagine; by host glycosylation is found at N417, N423, and N430. 4 cysteine pairs are disulfide-bonded: C429–C554, C452–C459, C488–C496, and C505–C510. The N-linked (GlcNAc...) asparagine; by host glycan is linked to N448. Positions 475 to 480 (EESVTN) are HVR2. The segment at 482–495 (ADMRPYCWHYPPRP) is CD81-binding 1. N534 carries an N-linked (GlcNAc...) asparagine; by host glycan. Residues 546-553 (PPKGAWFG) form a CD81-binding 2 region. N558 is a glycosylation site (N-linked (GlcNAc...) asparagine; by host). Cystine bridges form between C566-C571, C585-C589, C601-C624, and C611-C648. Residues N627 and N649 are each glycosylated (N-linked (GlcNAc...) (high mannose) asparagine; by host). C656 and C681 are disulfide-bonded. A PKR/eIF2-alpha phosphorylation homology domain (PePHD) region spans residues 664 to 675 (SQLSPLLHSTTE). The chain crosses the membrane as a helical span at residues 730 to 750 (LADARVCACLWMLLLLGQAEA). Residues 751-761 (ALEKLVILHAA) are Lumenal-facing. Residues 762 to 782 (SAASSNGLLYFILFFVAAWCI) form a helical membrane-spanning segment. Residues 783–786 (KGRA) are Cytoplasmic-facing. The helical transmembrane segment at 787-807 (VPMVTYTLLGCWSFVLLLMAL) threads the bilayer. Residues 808-817 (PHQAYALDAA) are Lumenal-facing. The chain crosses the membrane as a helical span at residues 818 to 838 (EQGQIGMALLIAITAFTITPA). At 839 to 885 (YKILLSRCLWWTCYMLVLAEALIQDWIPPLQARGGRDGVIWAMTMFY) the chain is on the cytoplasmic side. The chain crosses the membrane as a helical span at residues 886–906 (PGVVFDITKWLLAILGPGYLF). Residues 905–1030 (LFRAAVMRTP…GYTSKGWRLL (126 aa)) enclose the Peptidase C18 domain. Over 907–932 (RAAVMRTPYFVRANALLRMCALVKQL) the chain is Lumenal. Residues 908–1210 (AAVMRTPYFV…PVESLDVVTR (303 aa)) are protease NS2-3. The S-palmitoyl cysteine; by host moiety is linked to residue C926. A helical transmembrane segment spans residues 933-953 (AGGKYVQVALITLGKWTGTYI). Residues 933-953 (AGGKYVQVALITLGKWTGTYI) form an interaction with host SCPS1 region. The Cytoplasmic portion of the chain corresponds to 954 to 1661 (YDHLSPMSDW…CMQADLEIMT (708 aa)). Catalysis depends on for protease NS2 activity; shared with dimeric partner residues H956, E976, and C997. A Peptidase S29 domain is found at 1031 to 1212 (APITAYAQQT…ESLDVVTRSP (182 aa)). Residues H1087 and D1111 each act as charge relay system; for serine protease NS3 activity in the active site. Zn(2+) is bound by residues C1127 and C1129. S1169 (charge relay system; for serine protease NS3 activity) is an active-site residue. Residues C1175 and H1179 each contribute to the Zn(2+) site. Residues 1221–1373 (PAVPQTYQVG…PNIEEVALGH (153 aa)) form the Helicase ATP-binding domain. 1234–1241 (APTGSGKS) contacts ATP. Residues S1241 and E1321 each coordinate Mg(2+). The DECH box signature appears at 1320 to 1323 (DECH). An RNA-binding region spans residues 1490–1502 (QRRGRTGRGRLGI). The helical transmembrane segment at 1662–1682 (STWVLAGGVLAAVAAYCLATG) threads the bilayer. The interval 1683–1694 (CVSIIGRIHVNQ) is NS3-binding. The Cytoplasmic portion of the chain corresponds to 1683 to 1809 (CVSIIGRIHV…ALTSPLSTST (127 aa)). A helical transmembrane segment spans residues 1810–1830 (TILLNIMGGWLASQIAPPAGA). Topologically, residues 1831-1832 (TG) are lumenal. Residues 1833-1853 (FVVSGLVGAAVGSIGLGKILV) form a helical membrane-spanning segment. Position 1854 (D1854) is a topological domain, cytoplasmic. The helical transmembrane segment at 1855–1875 (VLAGYGAGISGALVAFKIMSG) threads the bilayer. Residues 1876-1885 (EKPSVEDVVN) lie on the Lumenal side of the membrane. A helical membrane pass occupies residues 1886–1906 (LLPAILSPGALVVGVICAAIL). The Cytoplasmic segment spans residues 1907–1976 (RRHVGQGEGA…WITEDCPVPC (70 aa)). C1976 carries the S-palmitoyl cysteine; by host lipid modification. An intramembrane segment occupies 1977 to 2006 (SGSWLRDVWDWVCSILIDFKNWLSAKLFPR). The Cytoplasmic portion of the chain corresponds to 2007–3016 (LPGIPFISCQ…YHSVSRARPR (1010 aa)). Positions 2015, 2033, 2035, and 2056 each coordinate Zn(2+). Positions 2124 to 2212 (EFFSWVDGVQ…ASSSASQLSA (89 aa)) are FKBP8-binding. A transcriptional activation region spans residues 2124 to 2336 (EFFSWVDGVQ…PVPPPRRRRA (213 aa)). The segment at 2139–2143 (PTPKA) is interaction with non-structural protein 4A. The interaction with host SKP2 stretch occupies residues 2193–2464 (RLARGSPPSA…ALITPCSPEE (272 aa)). Phosphoserine; by host occurs at positions 2198, 2201, 2205, 2208, 2211, and 2214. The segment at 2214-2253 (SLRATCTTHAKCPDIDMVDANLFCWCTMGGNMTRIESESK) is ISDR. Positions 2214–2279 (SLRATCTTHA…REPSIPSEYL (66 aa)) are interaction with EIF2AK2/PKR. An NS4B-binding region spans residues 2253 to 2310 (KVLMVDSFDPVVDKEDEREPSIPSEYLLPKSRFPPALPPWARPDYNPPLLETWKRPDY). The tract at residues 2303–2381 (ETWKRPDYQP…GTTGETSKSP (79 aa)) is V3. The SH3-binding motif lies at 2326–2329 (TPVP). The Nuclear localization signal signature appears at 2331–2339 (PRRRRAVVL). Residue K2354 forms a Glycyl lysine isopeptide (Lys-Gly) (interchain with G-Cter in ubiquitin) linkage. The segment at 2354-2434 (KSFGCPPPSG…APGSDSGSWS (81 aa)) is disordered. Over residues 2402–2411 (EPGDPDLEPE) the composition is skewed to acidic residues. Phosphoserine; by host is present on residues S2475 and S2488. Residues 2660-2778 (PMGFSYDTRC…ISESQGVEED (119 aa)) form the RdRp catalytic domain. Residues D2666, D2764, and D2765 each coordinate Mg(2+). A helical transmembrane segment spans residues 3017–3037 (LLLLGLLLLCVGVGIFLLPAR).

Belongs to the hepacivirus polyprotein family. As to quaternary structure, homooligomer. Interacts with E1 (via C-terminus). Interacts with the non-structural protein 5A. Interacts (via N-terminus) with host STAT1 (via SH2 domain); this interaction results in decreased STAT1 phosphorylation and ubiquitin-mediated proteasome-dependent STAT1 degradation, leading to decreased IFN-stimulated gene transcription. Interacts with host STAT3; this interaction constitutively activates STAT3. Interacts with host LTBR receptor. Interacts with host TNFRSF1A receptor and possibly induces apoptosis. Interacts with host HNRPK. Interacts with host YWHAE. Interacts with host UBE3A/E6AP. Interacts with host DDX3X. Interacts with host APOA2. Interacts with host RXRA protein. Interacts with host SP110 isoform 3/Sp110b; this interaction sequesters the transcriptional corepressor SP110 away from the nucleus. Interacts with host CREB3 nuclear transcription protein; this interaction triggers cell transformation. Interacts with host ACY3. Interacts with host C1QR1. Interacts with host RBM24; this interaction, which enhances the interaction of the mature core protein with 5'-UTR, may inhibit viral translation and favor replication. Interacts with host EIF2AK2/PKR; this interaction induces the autophosphorylation of EIF2AK2. Part of the viral assembly initiation complex composed of NS2, E1, E2, NS3, NS4A, NS5A and the mature core protein. Forms a heterodimer with envelope glycoprotein E2. Interacts with mature core protein. Interacts with protease NS2. The heterodimer E1/E2 interacts with host CLDN1; this interaction plays a role in viral entry into host cell. Interacts with host SPSB2 (via C-terminus). Part of the viral assembly initiation complex composed of NS2, E1, E2, NS3, NS4A, NS5A and the mature core protein. Interacts with host NEURL3; this interaction prevents E1 binding to glycoprotein E2. In terms of assembly, forms a heterodimer with envelope glycoprotein E1. Interacts with host CD81 and SCARB1 receptors; these interactions play a role in viral entry into host cell. Interacts with host EIF2AK2/PKR; this interaction inhibits EIF2AK2 and probably allows the virus to evade the innate immune response. Interacts with host CD209/DC-SIGN and CLEC4M/DC-SIGNR. Interact with host SPCS1; this interaction is essential for viral particle assembly. Interacts with protease NS2. The heterodimer E1/E2 interacts with host CLDN1; this interaction plays a role in viral entry into host cell. Part of the viral assembly initiation complex composed of NS2, E1, E2, NS3, NS4A, NS5A and the mature core protein. Interacts with host SLC3A2/4F2hc; the interaction may facilitate viral entry into host cell. Interacts with human PLSCR1. As to quaternary structure, homohexamer. Homoheptamer. Interacts with protease NS2. Homodimer. Interacts with host SPCS1; this interaction is essential for viral particle assembly. Interacts with envelope glycoprotein E1. Interacts with envelope glycoprotein E2. Interacts with viroporin p7. Interacts with serine protease/helicase NS3. Part of the replication complex composed of NS2, NS3, NS4A, NS4B, NS5A and the RNA-directed RNA polymerase embedded in an ER-derived membranous web. Part of the viral assembly initiation complex composed of NS2, E1, E2, NS3, NS4A, NS5A and the mature core protein. In terms of assembly, interacts with protease NS2. Interacts with non-structural protein 4A; this interaction stabilizes the folding of NS3 serine protease. NS3-NS4A interaction is essential for NS3 activation and allows membrane anchorage of the latter. NS3/NS4A complex also prevents phosphorylation of host IRF3, thus preventing the establishment of dsRNA induced antiviral state. Interacts with host MAVS; this interaction leads to the cleavage and inhibition of host MAVS. Interacts with host TICAM1; this interaction leads to the cleavage and inhibition of host TICAM1. Interacts with host TANK-binding kinase/TBK1; this interaction results in the inhibition of the association between TBK1 and IRF3, which leads to the inhibition of IRF3 activation. Interacts with host RBM24. Part of the replication complex composed of NS2, NS3, NS4A, NS4B, NS5A and the RNA-directed RNA polymerase embedded in an ER-derived membranous web. Part of the viral assembly initiation complex composed of NS2, E1, E2, NS3, NS4A, NS5A and the mature core protein. As to quaternary structure, interacts with NS3 serine protease; this interaction stabilizes the folding of NS3 serine protease. NS3-NS4A interaction is essential for NS3 activation and allows membrane anchorage of the latter. Interacts with non-structural protein 5A (via N-terminus). Part of the replication complex composed of NS2, NS3, NS4A, NS4B, NS5A and the RNA-directed RNA polymerase embedded in an ER-derived membranous web. Part of the viral assembly initiation complex composed of NS2, E1, E2, NS3, NS4A, NS5A and the mature core protein. Homomultimer. Interacts with non-structural protein NS5A. Interacts with host PLA2G4C; this interaction likely initiates the recruitment of replication complexes to lipid droplets. Interacts with host STING; this interaction disrupts the interaction between STING and TBK1 thereby suppressing the interferon signaling. Part of the replication complex composed of NS2, NS3, NS4A, NS4B, NS5A and the RNA-directed RNA polymerase embedded in an ER-derived membranous web. In terms of assembly, monomer. Homodimer; dimerization is required for RNA-binding. Interacts with the mature core protein. Interacts (via N-terminus) with non-structural protein 4A. Interacts with non-structural protein 4B. Interacts (via region D2) with RNA-directed RNA polymerase. Part of the viral assembly initiation complex composed of NS2, E1, E2, NS3, NS4A, NS5A and the mature core protein. Part of the replication complex composed of NS2, NS3, NS4A, NS4B, NS5A and the RNA-directed RNA polymerase embedded in an ER-derived membranous web. Interacts with host GRB2. Interacts with host BIN1. Interacts with host PIK3R1. Interacts with host SRCAP. Interacts with host FKBP8. Interacts (via C-terminus) with host VAPB (via MSP domain). Interacts with host EIF2AK2/PKR; this interaction leads to disruption of EIF2AK2 dimerization by NS5A and probably allows the virus to evade the innate immune response. Interacts (via N-terminus) with host PACSIN2 (via N-terminus); this interaction attenuates protein kinase C alpha-mediated phosphorylation of PACSIN2 by disrupting the interaction between PACSIN2 and PRKCA. Interacts (via N-terminus) with host SRC kinase (via SH2 domain). Interacts with most Src-family kinases. Interacts with host IFI27 and SKP2; promotes the ubiquitin-mediated proteasomal degradation of NS5A. Interacts with host GPS2. Interacts with host TNFRSF21; this interaction allows the modulation by the virus of JNK, p38 MAPK, STAT3, and Akt signaling pathways in a DR6-dependent manner. Interacts (via N-terminus) with host CIDEB (via N-terminus); this interaction seems to regulate the association of HCV particles with APOE. Interacts with host CHKA/Choline Kinase-alpha; CHKA bridges host PI4KA and NS5A and potentiates NS5A-stimulated PI4KA activity, which then facilitates the targeting of the ternary complex to the ER for viral replication. Interacts with host SPSB2 (via C-terminus); this interaction targets NS5A for ubiquitination and degradation. Interacts with host RAB18; this interaction may promote the association of NS5A and other replicase components with lipid droplets. Interacts (via region D2) with host PPIA/CYPA; the interaction stimulates RNA-binding ability of NS5A and is dependent on the peptidyl-prolyl cis-trans isomerase activity of PPIA/CYPA. Interacts with host TRIM14; this interaction induces the degradation of NS5A. As to quaternary structure, homooligomer. Interacts with non-structural protein 5A. Interacts with host VAPB. Interacts with host PRK2/PKN2. Interacts with host HNRNPA1 and SEPT6; these interactions facilitate viral replication. Part of the replication complex composed of NS2, NS3, NS4A, NS4B, NS5A and the RNA-directed RNA polymerase. Requires Zn(2+) as cofactor. The cofactor is Mg(2+). In terms of processing, specific enzymatic cleavages in vivo yield mature proteins. The structural proteins, core, E1, E2 and p7 are produced by proteolytic processing by host signal peptidases. The core protein precursor is synthesized as a 23 kDa, which is retained in the ER membrane through the hydrophobic signal peptide. Cleavage by the signal peptidase releases the 21 kDa mature core protein. The cleavage of the core protein precursor occurs between aminoacids 176 and 188 but the exact cleavage site is not known. Some degraded forms of the core protein appear as well during the course of infection. The other proteins (p7, NS2, NS3, NS4A, NS4B, NS5A and NS5B) are cleaved by the viral proteases. Autoprocessing between NS2 and NS3 is mediated by the NS2 cysteine protease catalytic domain and regulated by the NS3 N-terminal domain. Post-translationally, phosphorylated by host PKC and PKA. Ubiquitinated; mediated by UBE3A and leading to core protein subsequent proteasomal degradation. In terms of processing, highly N-glycosylated. Post-translationally, palmitoylation is required for NS2/3 autoprocessing and E2 recruitment to membranes. Palmitoylated. This modification may play a role in its polymerization or in protein-protein interactions. In terms of processing, phosphorylated on serines in a basal form termed p56. p58 is a hyperphosphorylated form of p56. p56 and p58 coexist in the cell in roughly equivalent amounts. Hyperphosphorylation is dependent on the presence of NS4A. Host CSNK1A1/CKI-alpha or RPS6KB1 kinases may be responsible for NS5A phosphorylation. Post-translationally, tyrosine phosphorylation is essential for the interaction with host SRC. The N-terminus is phosphorylated by host PRK2/PKN2.

The protein resides in the host endoplasmic reticulum membrane. The protein localises to the host mitochondrion membrane. Its subcellular location is the virion. It localises to the host cytoplasm. It is found in the host nucleus. The protein resides in the host lipid droplet. The protein localises to the virion membrane. Its subcellular location is the host mitochondrion. It localises to the host cell membrane. It is found in the host perinuclear region. The catalysed reaction is Hydrolysis of four peptide bonds in the viral precursor polyprotein, commonly with Asp or Glu in the P6 position, Cys or Thr in P1 and Ser or Ala in P1'.. The enzyme catalyses a ribonucleoside 5'-triphosphate + H2O = a ribonucleoside 5'-diphosphate + phosphate + H(+). It catalyses the reaction ATP + H2O = ADP + phosphate + H(+). It carries out the reaction RNA(n) + a ribonucleoside 5'-triphosphate = RNA(n+1) + diphosphate. Its activity is regulated as follows. Inhibited by the antiviral drug hexamethylene amiloride. Inhibition by amantadine appears to be genotype-dependent. Also inhibited by long-alkyl-chain iminosugar derivatives. With respect to regulation, activity is up-regulated by PRK2/PKN2-mediated phosphorylation. In terms of biological role, packages viral RNA to form a viral nucleocapsid, and promotes virion budding. Participates in the viral particle production as a result of its interaction with the non-structural protein 5A. Binds RNA and may function as a RNA chaperone to induce the RNA structural rearrangements taking place during virus replication. Modulates viral translation initiation by interacting with viral IRES and 40S ribosomal subunit. Affects various cell signaling pathways, host immunity and lipid metabolism. Prevents the establishment of cellular antiviral state by blocking the interferon-alpha/beta (IFN-alpha/beta) and IFN-gamma signaling pathways and by blocking the formation of phosphorylated STAT1 and promoting ubiquitin-mediated proteasome-dependent degradation of STAT1. Activates STAT3 leading to cellular transformation. Regulates the activity of cellular genes, including c-myc and c-fos. May repress the promoter of p53, and sequester CREB3 and SP110 isoform 3/Sp110b in the cytoplasm. Represses cell cycle negative regulating factor CDKN1A, thereby interrupting an important check point of normal cell cycle regulation. Targets transcription factors involved in the regulation of inflammatory responses and in the immune response: suppresses TNF-induced NF-kappa-B activation, and activates AP-1. Binds to dendritic cells (DCs) via C1QR1, resulting in down-regulation of T-lymphocytes proliferation. Alters lipid metabolism by interacting with hepatocellular proteins involved in lipid accumulation and storage. Induces up-regulation of FAS promoter activity, and thereby contributes to the increased triglyceride accumulation in hepatocytes (steatosis). Functionally, forms a heterodimer with envelope glycoprotein E2, which mediates virus attachment to the host cell, virion internalization through clathrin-dependent endocytosis and fusion with host membrane. Fusion with the host cell is most likely mediated by both E1 and E2, through conformational rearrangements of the heterodimer required for fusion rather than a classical class II fusion mechanism. E1/E2 heterodimer binds host apolipoproteins such as APOB and ApoE thereby forming a lipo-viro-particle (LVP). APOE associated to the LVP allows the initial virus attachment to cell surface receptors such as the heparan sulfate proteoglycans (HSPGs), syndecan-1 (SDC1), syndecan-1 (SDC2), the low-density lipoprotein receptor (LDLR) and scavenger receptor class B type I (SCARB1). The cholesterol transfer activity of SCARB1 allows E2 exposure and binding of E2 to SCARB1 and the tetraspanin CD81. E1/E2 heterodimer binding on CD81 activates the epithelial growth factor receptor (EGFR) signaling pathway. Diffusion of the complex E1-E2-EGFR-SCARB1-CD81 to the cell lateral membrane allows further interaction with Claudin 1 (CLDN1) and occludin (OCLN) to finally trigger HCV entry. Its function is as follows. Forms a heterodimer with envelope glycoprotein E1, which mediates virus attachment to the host cell, virion internalization through clathrin-dependent endocytosis and fusion with host membrane. Fusion with the host cell is most likely mediated by both E1 and E2, through conformational rearrangements of the heterodimer required for fusion rather than a classical class II fusion mechanism. The interaction between envelope glycoprotein E2 and host apolipoprotein E/APOE allows the proper assembly, maturation and infectivity of the viral particles. This interaction is probably promoted via the up-regulation of cellular autophagy by the virus. E1/E2 heterodimer binds host apolipoproteins such as APOB and APOE thereby forming a lipo-viro-particle (LVP). APOE associated to the LVP allows the initial virus attachment to cell surface receptors such as the heparan sulfate proteoglycans (HSPGs), syndecan-1 (SDC1), syndecan-1 (SDC2), the low-density lipoprotein receptor (LDLR) and scavenger receptor class B type I (SCARB1). The cholesterol transfer activity of SCARB1 allows E2 exposure and binding of E2 to SCARB1 and the tetraspanin CD81. E1/E2 heterodimer binding on CD81 activates the epithelial growth factor receptor (EGFR) signaling pathway. Diffusion of the complex E1-E2-EGFR-SCARB1-CD81 to the cell lateral membrane allows further interaction with Claudin 1 (CLDN1) and occludin (OCLN) to finally trigger HCV entry. Inhibits host EIF2AK2/PKR activation, preventing the establishment of an antiviral state. Viral ligand for CD209/DC-SIGN and CLEC4M/DC-SIGNR, which are respectively found on dendritic cells (DCs), and on liver sinusoidal endothelial cells and macrophage-like cells of lymph node sinuses. These interactions allow the capture of circulating HCV particles by these cells and subsequent facilitated transmission to permissive cells such as hepatocytes and lymphocyte subpopulations. The interaction between E2 and host amino acid transporter complex formed by SLC3A2 and SLC7A5/LAT1 may facilitate viral entry into host cell. Ion channel protein that acts as a viroporin and plays an essential role in the assembly, envelopment and secretion of viral particles. Regulates the host cell secretory pathway, which induces the intracellular retention of viral glycoproteins and favors assembly of viral particles. Creates a pore in acidic organelles and releases Ca(2+) and H(+) in the cytoplasm of infected cells, leading to a productive viral infection. High levels of cytoplasmic Ca(2+) may trigger membrane trafficking and transport of viral ER-associated proteins to viroplasms, sites of viral genome replication. This ionic imbalance induces the assembly of the inflammasome complex, which triggers the maturation of pro-IL-1beta into IL-1beta through the action of caspase-1. Targets also host mitochondria and induces mitochondrial depolarization. In addition of its role as a viroporin, acts as a lipid raft adhesion factor. In terms of biological role, cysteine protease required for the proteolytic auto-cleavage between the non-structural proteins NS2 and NS3. The N-terminus of NS3 is required for the function of NS2 protease (active region NS2-3). Promotes the initiation of viral particle assembly by mediating the interaction between structural and non-structural proteins. Functionally, displays three enzymatic activities: serine protease with a chymotrypsin-like fold, NTPase and RNA helicase. NS3 serine protease, in association with NS4A, is responsible for the cleavages of NS3-NS4A, NS4A-NS4B, NS4B-NS5A and NS5A-NS5B. The NS3/NS4A complex prevents phosphorylation of host IRF3, thus preventing the establishment of dsRNA induced antiviral state. The NS3/NS4A complex induces host amino acid transporter component SLC3A2, thus contributing to HCV propagation. NS3 RNA helicase binds to RNA and unwinds both dsDNA and dsRNA in the 3' to 5' direction, and likely resolves RNA complicated stable secondary structures in the template strand. Binds a single ATP and catalyzes the unzipping of a single base pair of dsRNA. Inhibits host antiviral proteins TBK1 and IRF3 thereby preventing the establishment of an antiviral state. Cleaves host MAVS/CARDIF thereby preventing the establishment of an antiviral state. Cleaves host TICAM1/TRIF, thereby disrupting TLR3 signaling and preventing the establishment of an antiviral state. Its function is as follows. Induces a specific membrane alteration that serves as a scaffold for the virus replication complex. This membrane alteration gives rise to the so-called ER-derived membranous web that contains the replication complex. NS4B self-interaction contributes to its function in membranous web formation. Promotes host TRIF protein degradation in a CASP8-dependent manner thereby inhibiting host TLR3-mediated interferon signaling. Disrupts the interaction between STING and TBK1 contributing to the inhibition of interferon signaling. Phosphorylated protein that is indispensable for viral replication and assembly. Both hypo- and hyperphosphorylated states are required for the viral life cycle. The hyperphosphorylated form of NS5A is an inhibitor of viral replication. Involved in RNA-binding and especially in binding to the viral genome. Zinc is essential for RNA-binding. Participates in the viral particle production as a result of its interaction with the mature viral core protein. Its interaction with host VAPB may target the viral replication complex to vesicles. Down-regulates viral IRES translation initiation. Mediates interferon resistance, presumably by interacting with and inhibiting host EIF2AK2/PKR. Prevents BIN1-induced apoptosis. Acts as a transcriptional activator of some host genes important for viral replication when localized in the nucleus. Via the interaction with host PACSIN2, modulates lipid droplet formation in order to promote virion assembly. Modulates TNFRSF21/DR6 signaling pathway for viral propagation. In terms of biological role, RNA-dependent RNA polymerase that performs primer-template recognition and RNA synthesis during viral replication. Initiates RNA transcription/replication at a flavin adenine dinucleotide (FAD), resulting in a 5'- FAD cap on viral RNAs. In this way, recognition of viral 5' RNA by host pattern recognition receptors can be bypassed, thereby evading activation of antiviral pathways. The protein is Genome polyprotein of Hepatitis C virus genotype 2c (isolate BEBE1) (HCV).